The primary structure comprises 270 residues: Glyoxylate pathway regulator (270 aa).

The tract at residues 1-33 (MNTEIPDLEKQQIDHNSGSDDPQPIHDDMAPVS) is disordered. At Tyr58 the chain carries Phosphotyrosine. Ser74 is modified (phosphoserine). 6 helical membrane-spanning segments follow: residues 80 to 100 (PAPL…LCTV), 109 to 129 (SIAV…AGMW), 137 to 157 (FGAA…AIEM), 175 to 195 (AVGI…LCTL), 198 to 218 (TVAF…LACA), and 227 to 247 (AIGG…NAYA).

This sequence belongs to the acetate uptake transporter (AceTr) (TC 2.A.96) family.

It is found in the membrane. Its function is as follows. Plays a role in the adaptation of cell metabolism to the utilization of acetic acid, possibly by inhibiting an anion-transporting ATPase and affecting the plasma membrane H(+)-ATPase. May be indirectly involved in the repression of genes encoding glyoxylate cycle enzymes. The chain is Glyoxylate pathway regulator (GPR1) from Yarrowia lipolytica (strain CLIB 122 / E 150) (Yeast).